The chain runs to 416 residues: 2-amino-3-ketobutyrate coenzyme A ligase, mitochondrial (416 aa).

A mitochondrion-targeting transit peptide spans 1–18 (MWASFMWHGALSPGRRAH). N6-acetyllysine; alternate is present on Lys42. The residue at position 42 (Lys42) is an N6-succinyllysine; alternate. 131-132 (CF) is a binding site for pyridoxal 5'-phosphate. Residue His156 coordinates substrate. At Lys184 the chain carries N6-acetyllysine; alternate. Lys184 is subject to N6-succinyllysine; alternate. Residues Ser203, 259–262 (TLGK), and 292–293 (SN) each bind pyridoxal 5'-phosphate. An N6-(pyridoxal phosphate)lysine modification is found at Lys262. Lys323 and Lys365 each carry N6-succinyllysine. N6-acetyllysine; alternate is present on Lys380. Lys380 is subject to N6-succinyllysine; alternate. A substrate-binding site is contributed by Arg386.

This sequence belongs to the class-II pyridoxal-phosphate-dependent aminotransferase family. It depends on pyridoxal 5'-phosphate as a cofactor.

It is found in the mitochondrion. It localises to the nucleus. It catalyses the reaction glycine + acetyl-CoA = (2S)-2-amino-3-oxobutanoate + CoA. It participates in amino-acid degradation; L-threonine degradation via oxydo-reductase pathway; glycine from L-threonine: step 2/2. Pyridoxal phosphate (PLP) dependent enzyme, which catalyzes the cleavage of 2-amino-3-oxobutanoate to glycine and acetyl-CoA. Catalyzes the second reaction step on the main metabolic degradation pathway for L-threonine. In Mus musculus (Mouse), this protein is 2-amino-3-ketobutyrate coenzyme A ligase, mitochondrial (Gcat).